Consider the following 365-residue polypeptide: 2-aminoethylphosphonate--pyruvate transaminase (365 aa).

Lys194 carries the post-translational modification N6-(pyridoxal phosphate)lysine.

The protein belongs to the class-V pyridoxal-phosphate-dependent aminotransferase family. PhnW subfamily. In terms of assembly, homodimer. The cofactor is pyridoxal 5'-phosphate.

It catalyses the reaction (2-aminoethyl)phosphonate + pyruvate = phosphonoacetaldehyde + L-alanine. Its function is as follows. Involved in phosphonate degradation. The polypeptide is 2-aminoethylphosphonate--pyruvate transaminase (Bacillus thuringiensis (strain Al Hakam)).